The sequence spans 597 residues: Elongation factor 4 (597 aa).

The tr-type G domain occupies glutamine 2–glutamine 184. Residues aspartate 14–threonine 19 and asparagine 131–aspartate 134 contribute to the GTP site.

Belongs to the TRAFAC class translation factor GTPase superfamily. Classic translation factor GTPase family. LepA subfamily.

It localises to the cell inner membrane. The catalysed reaction is GTP + H2O = GDP + phosphate + H(+). In terms of biological role, required for accurate and efficient protein synthesis under certain stress conditions. May act as a fidelity factor of the translation reaction, by catalyzing a one-codon backward translocation of tRNAs on improperly translocated ribosomes. Back-translocation proceeds from a post-translocation (POST) complex to a pre-translocation (PRE) complex, thus giving elongation factor G a second chance to translocate the tRNAs correctly. Binds to ribosomes in a GTP-dependent manner. In Bordetella petrii (strain ATCC BAA-461 / DSM 12804 / CCUG 43448), this protein is Elongation factor 4.